We begin with the raw amino-acid sequence, 125 residues long: MSLLRQRLQALPVLCLCVLVLACIGACQSEAYEGTPSPPPEQKMSRWNLVQSRMKELLEPAVTRTRDRWQWLWSLSTFRGFMQTYYDDHLRDLGPRTKTWLLESKDSLLNKTYSLCPRLLCAHKN.

The first 27 residues, 1–27 (MSLLRQRLQALPVLCLCVLVLACIGAC), serve as a signal peptide directing secretion.

Belongs to the apolipoprotein C4 family.

Its subcellular location is the secreted. Functionally, may participate in lipoprotein metabolism. This chain is Apolipoprotein C-IV (APOC4), found in Plecturocebus moloch (Dusky titi monkey).